The following is a 209-amino-acid chain: Thymidylate kinase (209 aa).

Position 13-20 (13-20 (GLEGAGKS)) interacts with ATP.

Belongs to the thymidylate kinase family.

The catalysed reaction is dTMP + ATP = dTDP + ADP. Functionally, phosphorylation of dTMP to form dTDP in both de novo and salvage pathways of dTTP synthesis. The polypeptide is Thymidylate kinase (Shewanella sp. (strain ANA-3)).